The following is a 316-amino-acid chain: BRCA2 and CDKN1A-interacting protein (316 aa).

The disordered stretch occupies residues 1–57 (MASKAKKRAVGNGIQRPLGAPGQREEEEEEEDEVEDEEEDEDDSDEEEDEVDEIVDE). The span at 25 to 57 (EEEEEEEDEVEDEEEDEDDSDEEEDEVDEIVDE) shows a compositional bias: acidic residues. Phosphoserine is present on residues serine 44 and serine 114. Positions 61-169 (IEFEAYSISD…EQSMVEQLDK (109 aa)) are interaction with BRCA2. Residues 163–261 (MVEQLDKLLN…NAEEEFFYEK (99 aa)) form an interaction with CDKN1A region. Position 283 is a phosphoserine (serine 283).

The protein belongs to the BCP1 family. Interacts with BRCA2, CDKN1A and MTDH/LYRIC. Interacts with DCTN1/p150-glued and ACTR1A/ARP1. Interacts with alpha-, beta- and gamma-tubulins. Interacts with TENT5C; the interaction has no effect on TENT5C poly(A) polymerase function. As to expression, expressed in the testes (at protein level).

The protein resides in the nucleus. It localises to the cytoplasm. It is found in the cytoskeleton. The protein localises to the microtubule organizing center. Its subcellular location is the centrosome. The protein resides in the centriole. It localises to the spindle pole. Its function is as follows. During interphase, required for microtubule organizing and anchoring activities. During mitosis, required for the organization and stabilization of the spindle pole. May promote cell cycle arrest by enhancing the inhibition of CDK2 activity by CDKN1A. May be required for repair of DNA damage by homologous recombination in conjunction with BRCA2. May not be involved in non-homologous end joining (NHEJ). This is BRCA2 and CDKN1A-interacting protein (Bccip) from Mus musculus (Mouse).